Consider the following 169-residue polypeptide: S-ribosylhomocysteine lyase (169 aa).

3 residues coordinate Fe cation: H54, H58, and C129.

The protein belongs to the LuxS family. As to quaternary structure, homodimer. Fe cation serves as cofactor.

The catalysed reaction is S-(5-deoxy-D-ribos-5-yl)-L-homocysteine = (S)-4,5-dihydroxypentane-2,3-dione + L-homocysteine. Functionally, involved in the synthesis of autoinducer 2 (AI-2) which is secreted by bacteria and is used to communicate both the cell density and the metabolic potential of the environment. The regulation of gene expression in response to changes in cell density is called quorum sensing. Catalyzes the transformation of S-ribosylhomocysteine (RHC) to homocysteine (HC) and 4,5-dihydroxy-2,3-pentadione (DPD). This chain is S-ribosylhomocysteine lyase, found in Haemophilus ducreyi (strain 35000HP / ATCC 700724).